The sequence spans 108 residues: MLKSNLKIDNRFSVMGVVSQLPKRLKSPSGIEHCKFLLEHRSDQIESGFTRQAWLKMPVQISGNQLIEKTQSITVGSKILVVGFITSHKTQSGLCQLVLHAEQIEFID.

The SSB domain occupies 8 to 108 (IDNRFSVMGV…LHAEQIEFID (101 aa)).

It belongs to the PriB family. In terms of assembly, homodimer. Interacts with PriA and DnaT. Component of the replication restart primosome. Primosome assembly occurs via a 'hand-off' mechanism. PriA binds to replication forks, subsequently PriB then DnaT bind; DnaT then displaces ssDNA to generate the helicase loading substrate.

Its function is as follows. Involved in the restart of stalled replication forks, which reloads the replicative helicase on sites other than the origin of replication; the PriA-PriB pathway is the major replication restart pathway. During primosome assembly it facilitates complex formation between PriA and DnaT on DNA; stabilizes PriA on DNA. Stimulates the DNA unwinding activity of PriA helicase. The sequence is that of Replication restart protein PriB from Haemophilus influenzae (strain 86-028NP).